A 244-amino-acid chain; its full sequence is 14-3-3 protein beta/alpha-B (244 aa).

M1 is subject to N-acetylmethionine.

This sequence belongs to the 14-3-3 family. Homodimer, and heterodimer with other family members.

Its subcellular location is the cytoplasm. In terms of biological role, adapter protein implicated in the regulation of a large spectrum of both general and specialized signaling pathways. Binds to a large number of partners, usually by recognition of a phosphoserine or phosphothreonine motif. Binding generally results in the modulation of the activity of the binding partner. In Xenopus laevis (African clawed frog), this protein is 14-3-3 protein beta/alpha-B (ywhab-b).